The chain runs to 224 residues: Glutamate/aspartate import permease protein GltK (224 aa).

Topologically, residues methionine 1–glycine 19 are periplasmic. Residues leucine 20 to methionine 40 traverse the membrane as a helical segment. Residues leucine 20–valine 216 form the ABC transmembrane type-1 domain. Residues leucine 41–proline 67 are Cytoplasmic-facing. Residues leucine 68–glycine 88 form a helical membrane-spanning segment. Residues leucine 89–aspartate 94 lie on the Periplasmic side of the membrane. Residues isoleucine 95–tyrosine 112 form a helical membrane-spanning segment. Residues serine 113–methionine 154 are Cytoplasmic-facing. A helical membrane pass occupies residues valine 155–leucine 175. Topologically, residues serine 176–glutamate 196 are periplasmic. The chain crosses the membrane as a helical span at residues methionine 197–serine 217. Residues tyrosine 218–alanine 224 are Cytoplasmic-facing.

Belongs to the binding-protein-dependent transport system permease family. HisMQ subfamily. As to quaternary structure, the complex is composed of two ATP-binding proteins (GltL), two transmembrane proteins (GltJ and GltK) and a solute-binding protein (GltI).

The protein resides in the cell inner membrane. Its function is as follows. Part of the ABC transporter complex GltIJKL involved in glutamate and aspartate uptake. Probably responsible for the translocation of the substrate across the membrane. The chain is Glutamate/aspartate import permease protein GltK (gltK) from Escherichia coli O157:H7.